The sequence spans 215 residues: Fibroblast growth factor 10 (215 aa).

The signal sequence occupies residues 1 to 36; sequence MWKWILTHCASAFPHLPGCCCCFLLLFLVSSVPVTC. The disordered stretch occupies residues 49–73; the sequence is TNSSSSSSSSSSSSSFSSPSSAGRH. A glycan (N-linked (GlcNAc...) asparagine) is linked at N50. A compositionally biased stretch (low complexity) spans 51-69; the sequence is SSSSSSSSSSSSSFSSPSS. Residue N203 is glycosylated (N-linked (GlcNAc...) asparagine).

It belongs to the heparin-binding growth factors family. In terms of assembly, interacts with FGFR1 and FGFR2. Interacts with FGFBP1. In terms of tissue distribution, preferentially expressed in the lung in adults.

The protein resides in the secreted. In terms of biological role, plays an important role in the regulation of embryonic development, cell proliferation and cell differentiation. Required for normal branching morphogenesis. May play a role in wound healing. The chain is Fibroblast growth factor 10 (Fgf10) from Rattus norvegicus (Rat).